Reading from the N-terminus, the 343-residue chain is Farnesyl pyrophosphate synthase (343 aa).

K49, R52, and Q87 together coordinate isopentenyl diphosphate. Residues D94 and D98 each coordinate Mg(2+). R103 is a binding site for dimethylallyl diphosphate. Residue R104 participates in isopentenyl diphosphate binding. 5 residues coordinate dimethylallyl diphosphate: K191, T192, Q230, K247, and K256.

It belongs to the FPP/GGPP synthase family. It depends on Mg(2+) as a cofactor. As to expression, expressed both in apical and sub-apical cells of glandular secretory trichomes.

Its subcellular location is the cytoplasm. It localises to the nucleus. The catalysed reaction is isopentenyl diphosphate + dimethylallyl diphosphate = (2E)-geranyl diphosphate + diphosphate. It carries out the reaction isopentenyl diphosphate + (2E)-geranyl diphosphate = (2E,6E)-farnesyl diphosphate + diphosphate. Its pathway is isoprenoid biosynthesis; farnesyl diphosphate biosynthesis; farnesyl diphosphate from geranyl diphosphate and isopentenyl diphosphate: step 1/1. It participates in sesquiterpene biosynthesis. The protein operates within isoprenoid biosynthesis; geranyl diphosphate biosynthesis; geranyl diphosphate from dimethylallyl diphosphate and isopentenyl diphosphate: step 1/1. Involved in the biosynthesis of the antimalarial endoperoxide artemisinin. Catalyzes the sequential condensation of isopentenyl pyrophosphate with the allylic pyrophosphates, dimethylallyl pyrophosphate, and then with the resultant geranylpyrophosphate to the ultimate product farnesyl pyrophosphate. Promotes anti-malarial and antimicrobial (toward Gram-positive bacteria B.subtilis and S.aureus) activities of plant crude extract probably by triggering artemisinin levels. The sequence is that of Farnesyl pyrophosphate synthase from Artemisia annua (Sweet wormwood).